We begin with the raw amino-acid sequence, 166 residues long: Interferon gamma (166 aa).

Positions 1–23 (MNYTSYILAFQLCVILGSSGCYC) are cleaved as a signal peptide. Gln-24 carries the pyrrolidone carboxylic acid modification. 2 N-linked (GlcNAc...) asparagine glycosylation sites follow: Asn-39 and Asn-106. The disordered stretch occupies residues 147-166 (SNLRKRKRRQNQIQGRRASK).

This sequence belongs to the type II (or gamma) interferon family. As to quaternary structure, homodimer. Interacts with IFNGR1 (via extracellular domain); this interaction promotes IFNGR1 dimerization. As to expression, released primarily from activated T lymphocytes.

Its subcellular location is the secreted. Functionally, type II interferon produced by immune cells such as T-cells and NK cells that plays crucial roles in antimicrobial, antiviral, and antitumor responses by activating effector immune cells and enhancing antigen presentation. Primarily signals through the JAK-STAT pathway after interaction with its receptor IFNGR1 to affect gene regulation. Upon IFNG binding, IFNGR1 intracellular domain opens out to allow association of downstream signaling components JAK2, JAK1 and STAT1, leading to STAT1 activation, nuclear translocation and transcription of IFNG-regulated genes. Many of the induced genes are transcription factors such as IRF1 that are able to further drive regulation of a next wave of transcription. Plays a role in class I antigen presentation pathway by inducing a replacement of catalytic proteasome subunits with immunoproteasome subunits. In turn, increases the quantity, quality, and repertoire of peptides for class I MHC loading. Increases the efficiency of peptide generation also by inducing the expression of activator PA28 that associates with the proteasome and alters its proteolytic cleavage preference. Up-regulates as well MHC II complexes on the cell surface by promoting expression of several key molecules such as cathepsins B/CTSB, H/CTSH, and L/CTSL. Participates in the regulation of hematopoietic stem cells during development and under homeostatic conditions by affecting their development, quiescence, and differentiation. In Lama glama (Llama), this protein is Interferon gamma (IFNG).